A 177-amino-acid chain; its full sequence is Large ribosomal subunit protein uL6 (177 aa).

Belongs to the universal ribosomal protein uL6 family. In terms of assembly, part of the 50S ribosomal subunit.

Functionally, this protein binds to the 23S rRNA, and is important in its secondary structure. It is located near the subunit interface in the base of the L7/L12 stalk, and near the tRNA binding site of the peptidyltransferase center. The sequence is that of Large ribosomal subunit protein uL6 from Aeromonas salmonicida (strain A449).